A 458-amino-acid chain; its full sequence is Flavohemoprotein (458 aa).

In terms of domain architecture, Globin spans 2–158 (TLSEDTLRAV…LADLFIKREE (157 aa)). A heme b-binding site is contributed by His-107. Active-site charge relay system residues include Tyr-117 and Glu-157. A reductase region spans residues 169–457 (GGWRQTRTFR…FEMFGPFKAS (289 aa)). An FAD-binding FR-type domain is found at 172–279 (RQTRTFRVEE…APPYGDFFLR (108 aa)). FAD contacts are provided by residues Tyr-211 and 228–231 (RQYS). NADP(+) is bound at residue 321 to 326 (GIGQTP). 450–453 (MFGP) lines the FAD pocket.

The protein belongs to the globin family. Two-domain flavohemoproteins subfamily. This sequence in the C-terminal section; belongs to the flavoprotein pyridine nucleotide cytochrome reductase family. Monomer. Heme b serves as cofactor. FAD is required as a cofactor.

It carries out the reaction 2 nitric oxide + NADPH + 2 O2 = 2 nitrate + NADP(+) + H(+). The enzyme catalyses 2 nitric oxide + NADH + 2 O2 = 2 nitrate + NAD(+) + H(+). Its function is as follows. Flavohemoprotein involved in nitric oxide (NO) detoxification in an aerobic process, termed nitric oxide dioxygenase (NOD) reaction that utilizes O(2) and NAD(P)H to convert NO to nitrate, which protects the protozoan parasite from various noxious nitrogen compounds. Therefore, plays a central role in the inducible response to nitrosative stress. May also be involved in O(2) detoxification. The chain is Flavohemoprotein (hmpA) from Giardia intestinalis (strain ATCC 50803 / WB clone C6) (Giardia lamblia).